The sequence spans 445 residues: Peptide chain release factor 1, mitochondrial (445 aa).

The transit peptide at 1 to 61 directs the protein to the mitochondrion; it reads MNRHLCVWLF…LLSKNWSRRY (61 aa). Positions 297–361 are GGQ domain; it reads PKDLRIDTFR…LRARLYQQII (65 aa). Positions 311 to 313 match the GGQ motif; the sequence is GGQ. Gln313 carries the post-translational modification N5-methylglutamine.

It belongs to the prokaryotic/mitochondrial release factor family. Post-translationally, methylation of glutamine in the GGQ triplet by HEMK1 is conserved from bacteria to mammals.

It localises to the mitochondrion. In terms of biological role, mitochondrial peptide chain release factor that directs the termination of translation in response to the peptide chain non-canonical stop codons AGG and AGA. Non-canonical termination codons AGG and AGA are found at the end of MT-CO1/COX1 and MT-ND6/ND6 open reading frames, respectively. Recognizes non-canonical stop codons via a network of interactions between the codon, MTRF1 and the ribosomal RNA (rRNA): in contrast to other translation release factors, which identify the codon in the A-site via direct interactions of amino acid side chains with the bases, MTRF1 repositions the first 2 bases of the stop codon to use an intricate network of interactions that includes residues of the release factor, the rRNA of the small ribosomal subunit, as well as neighboring bases of the mRNA. The polypeptide is Peptide chain release factor 1, mitochondrial (Homo sapiens (Human)).